A 182-amino-acid chain; its full sequence is MTLEQLIPLIIMAFALGMDAFSVSLGMGMVTLKLRQILYIGMTIGIFHIIMPFIGMVLGRFLSERYGDVANFAGAILLIGLGFYIVYSSILEGEETRTAPIGISLFVFAFGVSIDSFSVGLSLGIYGAETIITILLFGLISMLLAWMGLLLGSHAKNILGTYGEIVGGIILVGFGLYLLFPI.

6 helical membrane passes run 6-26, 37-57, 72-92, 101-121, 131-151, and 162-182; these read LIPL…VSLG, ILYI…IGMV, FAGA…SILE, IGIS…SVGL, IITI…GLLL, and YGEI…LFPI.

Belongs to the MntP (TC 9.B.29) family.

Its subcellular location is the cell membrane. Functionally, probably functions as a manganese efflux pump. In Bacillus mycoides (strain KBAB4) (Bacillus weihenstephanensis), this protein is Putative manganese efflux pump MntP.